The chain runs to 428 residues: Spliceosome RNA helicase Ddx39b (428 aa).

Positions 1 to 19 (MAENDVDNELLDYEDDEVE) are enriched in acidic residues. The interval 1 to 31 (MAENDVDNELLDYEDDEVETAAGADGTEAPA) is disordered. Position 2 is an N-acetylalanine (Ala-2). An N6-acetyllysine; alternate modification is found at Lys-36. Lys-36 participates in a covalent cross-link: Glycyl lysine isopeptide (Lys-Gly) (interchain with G-Cter in SUMO2); alternate. A phosphoserine mark is found at Ser-38 and Ser-41. The Q motif motif lies at 45–73 (SGFRDFLLKPELLRAIVDCGFEHPSEVQH). Residues 76–249 (IPQAILGMDV…RKFMQDPMEI (174 aa)) form the Helicase ATP-binding domain. ATP is bound at residue 89 to 96 (AKSGMGKT). Thr-172 is modified (phosphothreonine). Residues 196 to 199 (DECD) carry the DECD box motif. In terms of domain architecture, Helicase C-terminal spans 261–422 (GLQQYYVKLK…ELPDEIDISS (162 aa)).

Belongs to the DEAD box helicase family. DECD subfamily. As to quaternary structure, homodimer, and heterodimer with DDX39A. DDX39B interacts with the THO subcomplex to form the THO-DDX39B complex which multimerizes into a 28-subunit tetrameric assembly. Component of the transcription/export (TREX) complex at least composed of ALYREF/THOC4, DDX39B, SARNP/CIP29, CHTOP and the THO subcomplex; in the complex interacts with THOC2. THOC1-THOC2-THOC3-DDX39B subcomplex is sufficient for the interaction with export factor NXF1-NXT1. TREX seems to have a dynamic structure involving ATP-dependent remodeling. Within the TREX complex bridges ALYREF/THOC4 and the THO subcomplex, and, in a ATP-dependent manner, ALYREF/THOC4 and SARNP/CIP29. Component of the spliceosome. Interacts directly with U2AF2. Interacts with RBM8A, RNPS1 and SRRM1, FYTTD1/UIF, THOC1, MX1 and POLDIP3. Interacts with LUZP4. Interacts with SARNP/CIP29 (via the C-terminal domain); the interaction is direct and facilitates RNA binding of DDX39B.

It is found in the nucleus. The protein resides in the nucleus speckle. It localises to the cytoplasm. The catalysed reaction is ATP + H2O = ADP + phosphate + H(+). Functionally, involved in nuclear export of spliced and unspliced mRNA. Component of the TREX complex which is thought to couple mRNA transcription, processing and nuclear export, and specifically associates with spliced mRNA and not with unspliced pre-mRNA. The TREX complex is recruited to spliced mRNAs by a transcription-independent mechanism, binds to mRNA upstream of the exon-junction complex (EJC) and is recruited in a splicing- and cap-dependent manner to a region near the 5' end of the mRNA where it functions in mRNA export to the cytoplasm via the TAP/NXF1 pathway. The THOC1-THOC2-THOC3 core complex alone is sufficient to promote ATPase activity of DDX39B; in the complex THOC2 is the only component that directly interacts with DDX39B. Associates with SARNP/CIP29, which facilitates RNA binding of DDX39B and likely plays a role in mRNA export. May undergo several rounds of ATP hydrolysis during assembly of TREX to drive subsequent loading of components such as ALYREF/THOC4 and CHTOP onto mRNA. Also associates with pre-mRNA independent of ALYREF/THOC4. Involved in the nuclear export of intronless mRNA; the ATP-bound form is proposed to recruit export adapter ALYREF/THOC4 to intronless mRNA; its ATPase activity is cooperatively stimulated by RNA and ALYREF/THOC4 and ATP hydrolysis is thought to trigger the dissociation from RNA to allow the association of ALYREF/THOC4 and the NXF1-NXT1 heterodimer. Involved in transcription elongation and genome stability. Its function is as follows. Splice factor that is required for the first ATP-dependent step in spliceosome assembly and for the interaction of U2 snRNP with the branchpoint. Has both RNA-stimulated ATP binding/hydrolysis activity and ATP-dependent RNA unwinding activity. Even with the stimulation of RNA, the ATPase activity is weak. Can only hydrolyze ATP but not other NTPs. The RNA stimulation of ATPase activity does not have a strong preference for the sequence and length of the RNA. However, ssRNA stimulates the ATPase activity much more strongly than dsRNA. Can unwind 5' or 3' overhangs or blunt end RNA duplexes in vitro. The ATPase and helicase activities are not influenced by U2AF2; the effect of ALYREF/THOC4 is reported conflictingly. This chain is Spliceosome RNA helicase Ddx39b (Ddx39b), found in Mus musculus (Mouse).